A 238-amino-acid polypeptide reads, in one-letter code: C-type lectin domain family 4 member A (238 aa).

The Cytoplasmic segment spans residues 1–48; the sequence is MASEITYAEVKFKNESNSLHTYSESPAAPREKPIRDLRKPGSPSLLLT. The short motif at 5 to 10 is the ITIM motif element; sequence ITYAEV. The helical; Signal-anchor for type II membrane protein transmembrane segment at 49–69 threads the bilayer; it reads SLMLLLLLLAITFLVAFIIYF. At 70–238 the chain is on the extracellular side; sequence QKYSQLLEEK…SVCQMKKINL (169 aa). N-linked (GlcNAc...) asparagine glycosylation occurs at Asn91. Cys107 and Cys118 are joined by a disulfide. The 108-residue stretch at 126–233 folds into the C-type lectin domain; sequence SSASWNKSEE…SLKQKSVCQM (108 aa). Residues Asn131 and Asn136 are each glycosylated (N-linked (GlcNAc...) asparagine). Intrachain disulfides connect Cys137/Cys231 and Cys205/Cys223. Ca(2+)-binding residues include Val146, Glu152, Glu197, Ser199, and Glu203. Alpha-D-mannopyranose is bound by residues 197-199 and Glu203; that span reads EPS. 209 to 211 serves as a coordination point for N-acetyl-D-glucosamine; it reads IYR. Ca(2+)-binding residues include Asn219 and Asp220.

May interact with PTPN6 via its ITIM site. In terms of tissue distribution, expressed in splenic antigen-presenting cells including B-cells, monocytes/macrophages, and dendritic cells (at protein level). Expressed in spleen and lymph node and slightly increased with dendritic cell maturation.

It is found in the cell membrane. Functionally, may be involved in regulating immune reactivity. May play a role in modulating dendritic cells (DC) differentiation and/or maturation. May be involved in the inhibition of B-cell-receptor-mediated calcium mobilization and protein tyrosine phosphorylation. C-type lectin receptor that binds carbohydrates mannose and fucose but also weakly interacts with N-acetylglucosamine (GlcNAc) in a Ca(2+)-dependent manner. Involved in regulating immune reactivity. Once triggered by antigen, it is internalized by clathrin-dependent endocytosis and delivers its antigenic cargo into the antigen presentation pathway resulting in cross-priming of CD8(+) T cells. This cross-presentation and cross-priming are enhanced by TLR7 and TLR8 agonists with increased expansion of the CD8(+) T cells, high production of IFNG and TNF with reduced levels of IL4, IL5 and IL13. In plasmacytoid dendritic cells, inhibits TLR9-mediated IFNA and TNF production. May be involved via its ITIM motif (immunoreceptor tyrosine-based inhibitory motifs) in the inhibition of B-cell-receptor-mediated calcium mobilization and protein tyrosine phosphorylation. The protein is C-type lectin domain family 4 member A (Clec4a) of Mus musculus (Mouse).